Here is a 286-residue protein sequence, read N- to C-terminus: Meteorin-like protein (286 aa).

An N-terminal signal peptide occupies residues 1 to 21 (MLSPFLAYLLSVVLLCRIARS). 5 disulfides stabilise this stretch: C28/C51, C84/C120, C165/C235, C168/C259, and C178/C281.

It belongs to the meteorin family.

The protein localises to the secreted. In terms of biological role, hormone induced following exercise or cold exposure that promotes energy expenditure. Induced either in the skeletal muscle after exercise or in adipose tissue following cold exposure and is present in the circulation. Able to stimulate energy expenditure associated with the browning of the white fat depots and improves glucose tolerance. The chain is Meteorin-like protein (metrnl) from Danio rerio (Zebrafish).